Here is a 463-residue protein sequence, read N- to C-terminus: Glutamate--tRNA ligase (463 aa).

Residues 10-20 (PSPTGHLHIGG) carry the 'HIGH' region motif. Residues 236 to 240 (KLSKR) carry the 'KMSKS' region motif. Residue lysine 239 coordinates ATP.

The protein belongs to the class-I aminoacyl-tRNA synthetase family. Glutamate--tRNA ligase type 1 subfamily. As to quaternary structure, monomer.

The protein localises to the cytoplasm. It catalyses the reaction tRNA(Glu) + L-glutamate + ATP = L-glutamyl-tRNA(Glu) + AMP + diphosphate. Functionally, catalyzes the attachment of glutamate to tRNA(Glu) in a two-step reaction: glutamate is first activated by ATP to form Glu-AMP and then transferred to the acceptor end of tRNA(Glu). The chain is Glutamate--tRNA ligase from Nitratidesulfovibrio vulgaris (strain DP4) (Desulfovibrio vulgaris).